The primary structure comprises 338 residues: Ketol-acid reductoisomerase (NADP(+)) (338 aa).

The region spanning methionine 1–threonine 181 is the KARI N-terminal Rossmann domain. NADP(+)-binding positions include tyrosine 24–glutamine 27, arginine 47, serine 50, serine 52, and aspartate 82–glutamine 85. The active site involves histidine 107. Glycine 133 is a binding site for NADP(+). The region spanning alanine 182–isoleucine 327 is the KARI C-terminal knotted domain. 4 residues coordinate Mg(2+): aspartate 190, glutamate 194, glutamate 226, and glutamate 230. Residue serine 251 participates in substrate binding.

Belongs to the ketol-acid reductoisomerase family. Requires Mg(2+) as cofactor.

The catalysed reaction is (2R)-2,3-dihydroxy-3-methylbutanoate + NADP(+) = (2S)-2-acetolactate + NADPH + H(+). It carries out the reaction (2R,3R)-2,3-dihydroxy-3-methylpentanoate + NADP(+) = (S)-2-ethyl-2-hydroxy-3-oxobutanoate + NADPH + H(+). Its pathway is amino-acid biosynthesis; L-isoleucine biosynthesis; L-isoleucine from 2-oxobutanoate: step 2/4. It functions in the pathway amino-acid biosynthesis; L-valine biosynthesis; L-valine from pyruvate: step 2/4. In terms of biological role, involved in the biosynthesis of branched-chain amino acids (BCAA). Catalyzes an alkyl-migration followed by a ketol-acid reduction of (S)-2-acetolactate (S2AL) to yield (R)-2,3-dihydroxy-isovalerate. In the isomerase reaction, S2AL is rearranged via a Mg-dependent methyl migration to produce 3-hydroxy-3-methyl-2-ketobutyrate (HMKB). In the reductase reaction, this 2-ketoacid undergoes a metal-dependent reduction by NADPH to yield (R)-2,3-dihydroxy-isovalerate. The chain is Ketol-acid reductoisomerase (NADP(+)) from Nitrosococcus oceani (strain ATCC 19707 / BCRC 17464 / JCM 30415 / NCIMB 11848 / C-107).